Here is a 302-residue protein sequence, read N- to C-terminus: 4-hydroxy-tetrahydrodipicolinate synthase (302 aa).

Threonine 55 serves as a coordination point for pyruvate. Tyrosine 144 (proton donor/acceptor) is an active-site residue. Lysine 172 serves as the catalytic Schiff-base intermediate with substrate. Valine 214 provides a ligand contact to pyruvate.

The protein belongs to the DapA family. As to quaternary structure, homotetramer; dimer of dimers.

Its subcellular location is the cytoplasm. The enzyme catalyses L-aspartate 4-semialdehyde + pyruvate = (2S,4S)-4-hydroxy-2,3,4,5-tetrahydrodipicolinate + H2O + H(+). It participates in amino-acid biosynthesis; L-lysine biosynthesis via DAP pathway; (S)-tetrahydrodipicolinate from L-aspartate: step 3/4. Its function is as follows. Catalyzes the condensation of (S)-aspartate-beta-semialdehyde [(S)-ASA] and pyruvate to 4-hydroxy-tetrahydrodipicolinate (HTPA). This Prochlorococcus marinus (strain MIT 9303) protein is 4-hydroxy-tetrahydrodipicolinate synthase.